Consider the following 1722-residue polypeptide: Lymphocyte antigen 75 (1722 aa).

The N-terminal stretch at 1–27 is a signal peptide; that stretch reads MGTRRVTPGCAAGLLVLLLRCFGLAEP. At 28 to 1666 the chain is on the extracellular side; it reads SEFSGDDSFT…VVCKVPLSPD (1639 aa). One can recognise a Ricin B-type lectin domain in the interval 32 to 182; that stretch reads GDDSFTIVNE…FLVGETWHHD (151 aa). N-linked (GlcNAc...) asparagine glycosylation occurs at Asn135. The region spanning 164–211 is the Fibronectin type-II domain; that stretch reads SYGRPCEFPFLVGETWHHDCIRDENHSGPWCATTLNYEYDQKWGICLK. 4 disulfides stabilise this stretch: Cys169–Cys194, Cys183–Cys209, Cys247–Cys340, and Cys317–Cys332. The C-type lectin 1 domain maps to 225-341; it reads QIGSCYQFNN…CEAQQPYVCK (117 aa). Residues Asn345 and Asn377 are each glycosylated (N-linked (GlcNAc...) asparagine). 3 C-type lectin domains span residues 368–486, 493–625, and 652–791; these read QNGF…YVCK, NDTR…ICKK, and SNLS…WVCQ. 2 cysteine pairs are disulfide-bonded: Cys389-Cys485 and Cys462-Cys477. N-linked (GlcNAc...) asparagine glycosylation is present at Asn529. 3 disulfides stabilise this stretch: Cys597-Cys614, Cys678-Cys790, and Cys752-Cys782. Asn843 and Asn865 each carry an N-linked (GlcNAc...) asparagine glycan. Tyr933 carries the post-translational modification Phosphotyrosine. Asn934 and Asn1076 each carry an N-linked (GlcNAc...) asparagine glycan. 2 consecutive C-type lectin domains span residues 958–1091 and 1110–1222; these read FQNK…LCQK and YLNN…ICYY. 2 cysteine pairs are disulfide-bonded: Cys1060–Cys1080 and Cys1197–Cys1211. Residues Asn1225, Asn1320, and Asn1392 are each glycosylated (N-linked (GlcNAc...) asparagine). A C-type lectin 7 domain is found at 1251 to 1374; sequence FQNSCYNFMI…VIDETLHFYQ (124 aa). C-type lectin domains are found at residues 1401–1513 and 1542–1661; these read YEDG…ICYK and YGDH…VCKV. A disulfide bridge links Cys1488 with Cys1502. N-linked (GlcNAc...) asparagine glycans are attached at residues Asn1593 and Asn1626. Cys1635 and Cys1650 are joined by a disulfide. The helical transmembrane segment at 1667–1691 threads the bilayer; the sequence is YRGIAVLFAVLSVLALISGLIWFLV. The Cytoplasmic portion of the chain corresponds to 1692–1722; it reads QRNHFRWTGLSSVRYEHGANEDEVMLPSFHD. A phosphoserine mark is found at Ser1703 and Ser1719.

As to expression, expressed in the thymus and cultured bone marrow cells.

It is found in the membrane. In terms of biological role, acts as an endocytic receptor to direct captured antigens from the extracellular space to a specialized antigen-processing compartment. Causes reduced proliferation of B lymphocytes. The protein is Lymphocyte antigen 75 (LY75) of Mesocricetus auratus (Golden hamster).